The primary structure comprises 517 residues: Tyrosine 3-monooxygenase (517 aa).

Position 33 is a phosphoserine; by PKA (Ser-33). Fe cation is bound by residues His-345, His-350, and Glu-390.

Belongs to the biopterin-dependent aromatic amino acid hydroxylase family. Fe(2+) serves as cofactor.

The protein resides in the cytoplasm. It is found in the perinuclear region. Its subcellular location is the cell projection. The protein localises to the axon. It carries out the reaction (6R)-L-erythro-5,6,7,8-tetrahydrobiopterin + L-tyrosine + O2 = (4aS,6R)-4a-hydroxy-L-erythro-5,6,7,8-tetrahydrobiopterin + L-dopa. Its pathway is catecholamine biosynthesis; dopamine biosynthesis; dopamine from L-tyrosine: step 1/2. Its activity is regulated as follows. Phosphorylation leads to an increase in the catalytic activity. Involved in the synthesis of catecholamines, such as dopamine. Has a role in serotonin signaling. Required for normal explorative and foraging behavior. The polypeptide is Tyrosine 3-monooxygenase (cat-2) (Caenorhabditis briggsae).